The chain runs to 419 residues: Hyaluronan synthase (419 aa).

Transmembrane regions (helical) follow at residues 8 to 28, 33 to 53, 318 to 338, 345 to 365, and 376 to 396; these read LIVL…MYLF, VGIY…LSFL, IVAL…VAIG, AIQL…IVAL, and PASF…LQPL.

The protein belongs to the NodC/HAS family. Mg(2+) is required as a cofactor.

The protein resides in the cell membrane. It carries out the reaction [hyaluronan](n) + UDP-N-acetyl-alpha-D-glucosamine = N-acetyl-beta-D-glucosaminyl-(1-&gt;4)-[hyaluronan](n) + UDP + H(+). The enzyme catalyses N-acetyl-beta-D-glucosaminyl-(1-&gt;4)-[hyaluronan](n) + UDP-alpha-D-glucuronate = [hyaluronan](n+1) + UDP + H(+). It participates in glycan biosynthesis; hyaluronan biosynthesis. Functionally, glycosaminoglycan synthesis. The hyaluronic acid capsule is involved in the pathogenicity of group A Streptococci; it may be the major virulence determinant. In Streptococcus pyogenes serotype M6 (strain ATCC BAA-946 / MGAS10394), this protein is Hyaluronan synthase (hasA).